Reading from the N-terminus, the 314-residue chain is Oxaloacetate tautomerase FAHD2B, mitochondrial (314 aa).

Residues 1–84 constitute a mitochondrion transit peptide; that stretch reads MLVSGRRRLL…ATLSVARRAL (84 aa). The Mg(2+) site is built by Glu-159, Glu-161, and Asp-190.

This sequence belongs to the FAH family. It depends on Mg(2+) as a cofactor. Mn(2+) serves as cofactor.

The protein localises to the mitochondrion. It carries out the reaction oxaloacetate = enol-oxaloacetate. Its function is as follows. Tautomerase that converts enol-oxaloacetate, a strong inhibitor of succinate dehydrogenase, to the physiological keto form of oxaloacetate. It is thereby required to maximize aerobic respiration efficiency by preventing succinate dehydrogenase inhibition. The sequence is that of Oxaloacetate tautomerase FAHD2B, mitochondrial from Homo sapiens (Human).